Reading from the N-terminus, the 132-residue chain is Probable prefoldin subunit 4 (132 aa).

Belongs to the prefoldin subunit beta family. In terms of assembly, heterohexamer of two PFD-alpha type and four PFD-beta type subunits.

In terms of biological role, binds specifically to cytosolic chaperonin (c-CPN) and transfers target proteins to it. Binds to nascent polypeptide chain and promotes folding in an environment in which there are many competing pathways for nonnative proteins. This is Probable prefoldin subunit 4 (pfdn4) from Dictyostelium discoideum (Social amoeba).